Here is a 1637-residue protein sequence, read N- to C-terminus: Surface protein (1637 aa).

The signal sequence occupies residues 1–48 (MNKNSKKKLDFLPNKLNKYSIRRFTVGTASILVGATLIFGVANDQAEA). Disordered stretches follow at residues 49–305 (AENN…RTQV), 689–719 (VQKGEDGEKTTTTPTKVDPDTGDVVERGEPT), and 739–1611 (PQGH…NGTL). A compositionally biased stretch (basic and acidic residues) spans 56–65 (KQDDSSDASK). The span at 69-83 (NVQTIEQSSANSNES) shows a compositional bias: polar residues. 3 stretches are compositionally biased toward basic and acidic residues: residues 90–106 (DVTKDTTEQASTEEKAN), 127–180 (EAPK…KATT), and 188–264 (ETSK…KVET). Positions 289 to 298 (AKSNSNAQPS) are enriched in polar residues. G5 domains are found at residues 654 to 737 (QADL…TPEE), 783 to 865 (HGPK…GGEE), 911 to 993 (HGPK…GGEE), 1039 to 1121 (HGPK…GGEE), and 1167 to 1250 (HGPK…APEI). Over residues 779–817 (DVTKHGPKAGEPEVTKEEIPFEKKREFNPDLKPGEEKVT) the composition is skewed to basic and acidic residues. A compositionally biased stretch (low complexity) spans 818–832 (QEGQTGEKTTTTPTT). Over residues 907–945 (DVTKHGPKAGEPEVTKEEIPFEKKREFNPDLKPGEEKVT) the composition is skewed to basic and acidic residues. Residues 946 to 960 (QEGQTGEKTTTTPTT) are compositionally biased toward low complexity. Positions 1035–1073 (DVTKHGPKAGEPEVTKEEIPFEKKREFNPDLKPGEEKVT) are enriched in basic and acidic residues. A compositionally biased stretch (low complexity) spans 1074–1088 (QEGQTGEKTTTTPTT). The span at 1163–1189 (DVTKHGPKAGEPEVTKEEIPYETKRVL) shows a compositional bias: basic and acidic residues. 2 stretches are compositionally biased toward acidic residues: residues 1282–1291 (TGEIIEEPQD) and 1302–1580 (SDAD…DSDS). Repeat copies occupy residues 1301–1302 (DS), 1303–1304 (DA), 1305–1306 (DS), 1307–1308 (DS), 1309–1310 (DA), 1311–1312 (DS), 1313–1314 (DS), 1315–1316 (DA), 1317–1318 (DS), 1319–1320 (DS), 1321–1322 (DA), 1323–1324 (DS), 1325–1326 (DS), 1327–1328 (DA), 1329–1330 (DS), 1331–1332 (DS), 1333–1334 (DS), 1335–1336 (DS), 1337–1338 (DS), 1339–1340 (DS), 1341–1342 (DS), 1343–1344 (DS), 1345–1346 (DA), 1347–1348 (DS), 1349–1350 (DS), 1351–1352 (DS), 1353–1354 (DS), 1355–1356 (DS), 1357–1358 (DA), 1359–1360 (DS), 1361–1362 (DS), 1363–1364 (DA), 1365–1366 (DS), 1367–1368 (DS), 1369–1370 (DA), 1371–1372 (DS), 1373–1374 (DS), 1375–1376 (DS), 1377–1378 (DA), 1379–1380 (DS), 1381–1382 (DS), 1383–1384 (DS), 1385–1386 (DA), 1387–1388 (DS), 1389–1390 (DS), 1391–1392 (DS), 1393–1394 (DS), 1395–1396 (DS), 1397–1398 (DA), 1399–1400 (DS), 1401–1402 (DS), 1403–1404 (DS), 1405–1406 (DS), 1407–1408 (DS), 1409–1410 (DA), 1411–1412 (DS), 1413–1414 (DS), 1415–1416 (DA), 1417–1418 (DS), 1419–1420 (DS), 1421–1422 (DS), 1423–1424 (DS), 1425–1426 (DS), 1427–1428 (DA), 1429–1430 (DS), 1431–1432 (DS), 1433–1434 (DS), 1435–1436 (DS), 1437–1438 (DS), 1439–1440 (DA), 1441–1442 (DS), 1443–1444 (DS), 1445–1446 (DA), 1447–1448 (DS), 1449–1450 (DS), 1451–1452 (DA), 1453–1454 (DS), 1455–1456 (DS), 1457–1458 (DA), 1459–1460 (DS), 1461–1462 (DS), 1463–1464 (DS), 1465–1466 (DS), 1467–1468 (DS), 1469–1470 (DA), 1471–1472 (DS), 1473–1474 (DS), 1475–1476 (DA), 1477–1478 (DS), 1479–1480 (DS), 1481–1482 (DA), 1483–1484 (DS), 1485–1486 (DS), 1487–1488 (DA), 1489–1490 (DS), 1491–1492 (DS), 1493–1494 (DS), 1495–1496 (DS), 1497–1498 (DS), 1499–1500 (DA), 1501–1502 (DS), 1503–1504 (DS), 1505–1506 (DS), 1507–1508 (DS), 1509–1510 (DS), 1511–1512 (DS), 1513–1514 (DA), 1515–1516 (DS), 1517–1518 (DS), 1519–1520 (DA), 1521–1522 (DS), 1523–1524 (DS), 1525–1526 (DS), 1527–1528 (DA), 1529–1530 (DS), 1531–1532 (DS), 1533–1534 (DA), 1535–1536 (DS), 1537–1538 (DS), 1539–1540 (DA), 1541–1542 (DG), 1543–1544 (DS), 1545–1546 (DA), 1547–1548 (DS), 1549–1550 (DS), 1551–1552 (DA), 1553–1554 (DS), 1555–1556 (DS), 1557–1558 (DS), 1559–1560 (DS), 1561–1562 (DS), 1563–1564 (DS), 1565–1566 (DS), 1567–1568 (DS), 1569–1570 (DA), 1571–1572 (DS), 1573–1574 (DS), 1575–1576 (DS), 1577–1578 (DS), 1579–1580 (DS), and 1581–1582 (DA). The 141 X 2 AA tandem repeats of D-[SAG] stretch occupies residues 1301–1582 (DSDADSDSDA…DSDSDSDSDA (282 aa)). Basic and acidic residues predominate over residues 1581 to 1599 (DADRDHNDKTDKPNNKELP). An LPXTG sorting signal motif is present at residues 1598–1602 (LPDTG). Pentaglycyl murein peptidoglycan amidated threonine is present on Thr1601. The propeptide at 1602–1637 (GNDAQNNGTLFGSLFAALGGLFLVGRRRKNKNNEEK) is removed by sortase.

Its subcellular location is the secreted. The protein resides in the cell wall. Its function is as follows. Could have a role in preventing adhesion at some stages during an infection. This chain is Surface protein (pls), found in Staphylococcus aureus.